Consider the following 21-residue polypeptide: Serine protease inhibitor 1 (21 aa).

Residues 1–21 (EQQCTPGQTKKEDCNNCTSGD) enclose the Pacifastin domain. Positions 1 to 21 (EQQCTPGQTKKEDCNNCTSGD) are disordered.

The protein belongs to the protease inhibitor I19 family. In terms of tissue distribution, expressed in hemolymph.

Its subcellular location is the secreted. In terms of biological role, probable serine protease inhibitor. The sequence is that of Serine protease inhibitor 1 from Melanoplus sanguinipes (Migratory grasshopper).